A 457-amino-acid polypeptide reads, in one-letter code: MVNQENGVDLKSATQSDERKLFIETYGCQMNVADSEVVASIMKMDGYSMTENIEEADAIFVNTCSVRDNAEQKIYGRLQYFQSLKRKKKSLIVGVLGCMAERVKEDLIHVHHADLVVGPDSYLDLPNLVGAVEHGEKAINVELSTQETYKDVIPLKLPGVHISGFVSIMRGCNNFCTYCIVPYTRGRERSRDIESILNEIRDMHEKGFKEVTLLGQNVNSYSFEKEGETITFPILLDRVAKEVPDMRIRFTTSHPKDMSDDTLRVIAANDNICKFIHLPAQSGSSRILKVMNRKYTREWYLDRIAAIRRIVPDCAISTDLFCGFHSETEEDYQETLSLMREVGYDSAFLFKYSERPGTYAASHLEDNVPEEEKVRRLQGMIDLQNKLSEESNLRDIGKTFEVLIEGFSKRSREQLFGRTSQNKVVIFDKKNYHVGQFIKVKIHKASSATLFGEPVEE.

An MTTase N-terminal domain is found at 19–134; it reads RKLFIETYGC…LPNLVGAVEH (116 aa). Residues Cys-28, Cys-64, Cys-98, Cys-172, Cys-176, and Cys-179 each contribute to the [4Fe-4S] cluster site. A Radical SAM core domain is found at 158-390; sequence PGVHISGFVS…IDLQNKLSEE (233 aa). The TRAM domain occupies 393-456; it reads LRDIGKTFEV…SATLFGEPVE (64 aa).

It belongs to the methylthiotransferase family. MiaB subfamily. As to quaternary structure, monomer. The cofactor is [4Fe-4S] cluster.

It is found in the cytoplasm. It carries out the reaction N(6)-dimethylallyladenosine(37) in tRNA + (sulfur carrier)-SH + AH2 + 2 S-adenosyl-L-methionine = 2-methylsulfanyl-N(6)-dimethylallyladenosine(37) in tRNA + (sulfur carrier)-H + 5'-deoxyadenosine + L-methionine + A + S-adenosyl-L-homocysteine + 2 H(+). Functionally, catalyzes the methylthiolation of N6-(dimethylallyl)adenosine (i(6)A), leading to the formation of 2-methylthio-N6-(dimethylallyl)adenosine (ms(2)i(6)A) at position 37 in tRNAs that read codons beginning with uridine. The sequence is that of tRNA-2-methylthio-N(6)-dimethylallyladenosine synthase from Parabacteroides distasonis (strain ATCC 8503 / DSM 20701 / CIP 104284 / JCM 5825 / NCTC 11152).